The chain runs to 533 residues: T-complex protein 1 subunit delta (533 aa).

Residues 1 to 24 (MVVKPAARGMKPQGQAYKDKSKPA) are disordered.

This sequence belongs to the TCP-1 chaperonin family. In terms of assembly, heterooligomeric complex of about 850 to 900 kDa that forms two stacked rings, 12 to 16 nm in diameter.

The protein resides in the cytoplasm. Molecular chaperone; assists the folding of proteins upon ATP hydrolysis. Known to play a role, in vitro, in the folding of actin and tubulin. The sequence is that of T-complex protein 1 subunit delta from Ochlerotatus triseriatus (Eastern treehole mosquito).